The primary structure comprises 339 residues: Heat-inducible transcription repressor HrcA (339 aa).

This sequence belongs to the HrcA family.

In terms of biological role, negative regulator of class I heat shock genes (grpE-dnaK-dnaJ and groELS operons). Prevents heat-shock induction of these operons. The sequence is that of Heat-inducible transcription repressor HrcA from Clostridium perfringens (strain ATCC 13124 / DSM 756 / JCM 1290 / NCIMB 6125 / NCTC 8237 / Type A).